A 601-amino-acid chain; its full sequence is DNA ligase (601 aa).

Residue Asp-258 participates in ATP binding. Lys-260 acts as the N6-AMP-lysine intermediate in catalysis. ATP is bound by residues Arg-265, Arg-280, Glu-310, Phe-350, Arg-427, and Lys-433.

Belongs to the ATP-dependent DNA ligase family. Mg(2+) is required as a cofactor. Requires Ca(2+) as cofactor. Mn(2+) serves as cofactor.

It carries out the reaction ATP + (deoxyribonucleotide)n-3'-hydroxyl + 5'-phospho-(deoxyribonucleotide)m = (deoxyribonucleotide)n+m + AMP + diphosphate.. DNA ligase that seals nicks in double-stranded DNA during DNA replication, DNA recombination and DNA repair. Also has low activity with dATP. Inactive with NAD(+), CTP, GTP, UTP, dCTP, dGTP or dTTP. The polypeptide is DNA ligase (Saccharolobus shibatae (strain ATCC 51178 / DSM 5389 / JCM 8931 / NBRC 15437 / B12) (Sulfolobus shibatae)).